The chain runs to 57 residues: Protein translocase subunit SecE (57 aa).

A helical membrane pass occupies residues 33–53; it reads GLGILLVGFIGFVIFSIMTFV.

Belongs to the SecE/SEC61-gamma family. In terms of assembly, component of the Sec protein translocase complex. Heterotrimer consisting of SecY (alpha), SecG (beta) and SecE (gamma) subunits. The heterotrimers can form oligomers, although 1 heterotrimer is thought to be able to translocate proteins. Interacts with the ribosome. May interact with SecDF, and other proteins may be involved.

Its subcellular location is the cell membrane. In terms of biological role, essential subunit of the Sec protein translocation channel SecYEG. Clamps together the 2 halves of SecY. May contact the channel plug during translocation. The chain is Protein translocase subunit SecE from Natronomonas pharaonis (strain ATCC 35678 / DSM 2160 / CIP 103997 / JCM 8858 / NBRC 14720 / NCIMB 2260 / Gabara) (Halobacterium pharaonis).